A 287-amino-acid chain; its full sequence is 4,4'-diapophytoene synthase (287 aa).

(2E,6E)-farnesyl diphosphate-binding positions include 18–21, Tyr-41, and Arg-45; that span reads HSKS. Positions 48 and 52 each coordinate Mg(2+). Gln-165 is a (2E,6E)-farnesyl diphosphate binding site. Residue Asn-168 participates in Mg(2+) binding. Arg-171 serves as a coordination point for (2E,6E)-farnesyl diphosphate. A Mg(2+)-binding site is contributed by Asp-172. Tyr-248 provides a ligand contact to (2E,6E)-farnesyl diphosphate.

This sequence belongs to the phytoene/squalene synthase family. CrtM subfamily. Requires Mg(2+) as cofactor.

It catalyses the reaction 2 (2E,6E)-farnesyl diphosphate = 15-cis-4,4'-diapophytoene + 2 diphosphate. It participates in carotenoid biosynthesis; staphyloxanthin biosynthesis; staphyloxanthin from farnesyl diphosphate: step 1/5. Its function is as follows. Involved in the biosynthesis of the yellow-orange carotenoid staphyloxanthin, which plays a role in the virulence via its protective function against oxidative stress. Catalyzes the head-to-head condensation of two molecules of farnesyl diphosphate (FPP) into the colorless C(30) carotenoid 4,4'-diapophytoene (dehydrosqualene). The sequence is that of 4,4'-diapophytoene synthase from Staphylococcus aureus (strain NCTC 8325 / PS 47).